A 449-amino-acid polypeptide reads, in one-letter code: Asparagine--tRNA ligase (449 aa).

It belongs to the class-II aminoacyl-tRNA synthetase family. Homodimer.

The protein localises to the cytoplasm. The enzyme catalyses tRNA(Asn) + L-asparagine + ATP = L-asparaginyl-tRNA(Asn) + AMP + diphosphate + H(+). The chain is Asparagine--tRNA ligase from Mesomycoplasma hyopneumoniae (strain J / ATCC 25934 / NCTC 10110) (Mycoplasma hyopneumoniae).